Reading from the N-terminus, the 400-residue chain is Argininosuccinate synthase (400 aa).

An ATP-binding site is contributed by 8–16 (AYSGGLDTS). Tyr87 contributes to the L-citrulline binding site. ATP is bound at residue Gly117. L-aspartate is bound by residues Thr119, Asn123, and Asp124. An L-citrulline-binding site is contributed by Asn123. The L-citrulline site is built by Arg127, Ser175, Glu260, and Tyr272.

It belongs to the argininosuccinate synthase family. Type 1 subfamily. In terms of assembly, homotetramer.

The protein localises to the cytoplasm. It catalyses the reaction L-citrulline + L-aspartate + ATP = 2-(N(omega)-L-arginino)succinate + AMP + diphosphate + H(+). It participates in amino-acid biosynthesis; L-arginine biosynthesis; L-arginine from L-ornithine and carbamoyl phosphate: step 2/3. In Mycolicibacterium gilvum (strain PYR-GCK) (Mycobacterium gilvum (strain PYR-GCK)), this protein is Argininosuccinate synthase.